The following is a 309-amino-acid chain: Foldase protein PrsA (309 aa).

The first 22 residues, 1 to 22 (MKTRSKLAAGFLTLMSVATLAA), serve as a signal peptide directing secretion. The N-palmitoyl cysteine moiety is linked to residue Cys23. The S-diacylglycerol cysteine moiety is linked to residue Cys23. Residues 146-241 (TPETSVQVIK…TSYYIIKVTD (96 aa)) enclose the PpiC domain.

Belongs to the PrsA family.

It is found in the cell membrane. It carries out the reaction [protein]-peptidylproline (omega=180) = [protein]-peptidylproline (omega=0). Plays a major role in protein secretion by helping the post-translocational extracellular folding of several secreted proteins. The chain is Foldase protein PrsA from Streptococcus agalactiae serotype Ia (strain ATCC 27591 / A909 / CDC SS700).